We begin with the raw amino-acid sequence, 187 residues long: Transcriptional regulator VspR (187 aa).

Functionally, represses the transcription of several genes encoded within the Vibrio 7th pandemic island-1 (VSP-1), including dncV, VC_0176, VC_0178 and VC_0180. In Vibrio cholerae serotype O1 (strain ATCC 39315 / El Tor Inaba N16961), this protein is Transcriptional regulator VspR (vspR).